The chain runs to 76 residues: Neuromacin-like protein (76 aa).

Disulfide bonds link C18–C25, C40–C44, C54–C61, and C72–C74.

This sequence belongs to the macin family.

The protein localises to the secreted. The sequence is that of Neuromacin-like protein from Aplysia californica (California sea hare).